A 29-amino-acid polypeptide reads, in one-letter code: Potassium-transporting ATPase KdpF subunit (29 aa).

A helical transmembrane segment spans residues 2 to 22 (LIGEAVLAVVTVAVVAYLTYV).

Belongs to the KdpF family. The system is composed of three essential subunits: KdpA, KdpB and KdpC. The complex also contains KdpF, a small non-essential subunit.

It localises to the cell membrane. In terms of biological role, part of the high-affinity ATP-driven potassium transport (or Kdp) system, which catalyzes the hydrolysis of ATP coupled with the electrogenic transport of potassium into the cytoplasm. This subunit may be involved in stabilization of the complex. The Kdp system is essential for growth under K(+) limitation, and for survival under desiccation and salt crystal inclusion. This Halobacterium salinarum (strain ATCC 29341 / DSM 671 / R1) protein is Potassium-transporting ATPase KdpF subunit.